Here is a 294-residue protein sequence, read N- to C-terminus: Cytidine deaminase (294 aa).

CMP/dCMP-type deaminase domains follow at residues 48 to 168 (DEDA…FGPK) and 186 to 294 (LTGD…VLLG). Substrate is bound at residue 89 to 91 (NME). H102 is a Zn(2+) binding site. E104 acts as the Proton donor in catalysis. Positions 129 and 132 each coordinate Zn(2+).

Belongs to the cytidine and deoxycytidylate deaminase family. As to quaternary structure, homodimer. Zn(2+) is required as a cofactor.

It catalyses the reaction cytidine + H2O + H(+) = uridine + NH4(+). It carries out the reaction 2'-deoxycytidine + H2O + H(+) = 2'-deoxyuridine + NH4(+). Functionally, this enzyme scavenges exogenous and endogenous cytidine and 2'-deoxycytidine for UMP synthesis. The protein is Cytidine deaminase of Salmonella newport (strain SL254).